A 185-amino-acid polypeptide reads, in one-letter code: Potassium-transporting ATPase KdpC subunit (185 aa).

Residues 11–31 (LALLMTLVTGALYPLAVTGIA) traverse the membrane as a helical segment.

Belongs to the KdpC family. In terms of assembly, the system is composed of three essential subunits: KdpA, KdpB and KdpC.

It localises to the cell inner membrane. Functionally, part of the high-affinity ATP-driven potassium transport (or Kdp) system, which catalyzes the hydrolysis of ATP coupled with the electrogenic transport of potassium into the cytoplasm. This subunit acts as a catalytic chaperone that increases the ATP-binding affinity of the ATP-hydrolyzing subunit KdpB by the formation of a transient KdpB/KdpC/ATP ternary complex. The chain is Potassium-transporting ATPase KdpC subunit from Pseudomonas putida (strain ATCC 47054 / DSM 6125 / CFBP 8728 / NCIMB 11950 / KT2440).